The following is a 127-amino-acid chain: Large ribosomal subunit protein bL20 (127 aa).

This sequence belongs to the bacterial ribosomal protein bL20 family.

Binds directly to 23S ribosomal RNA and is necessary for the in vitro assembly process of the 50S ribosomal subunit. It is not involved in the protein synthesizing functions of that subunit. In Streptomyces avermitilis (strain ATCC 31267 / DSM 46492 / JCM 5070 / NBRC 14893 / NCIMB 12804 / NRRL 8165 / MA-4680), this protein is Large ribosomal subunit protein bL20.